Here is a 98-residue protein sequence, read N- to C-terminus: NADH-ubiquinone oxidoreductase chain 4L (98 aa).

3 consecutive transmembrane segments (helical) span residues 1–21 (MTAI…GVLV), 29–49 (TLLC…LLIT), and 59–79 (LPLT…ALLV).

This sequence belongs to the complex I subunit 4L family. In terms of assembly, core subunit of respiratory chain NADH dehydrogenase (Complex I) which is composed of 45 different subunits.

The protein localises to the mitochondrion inner membrane. The catalysed reaction is a ubiquinone + NADH + 5 H(+)(in) = a ubiquinol + NAD(+) + 4 H(+)(out). Functionally, core subunit of the mitochondrial membrane respiratory chain NADH dehydrogenase (Complex I) which catalyzes electron transfer from NADH through the respiratory chain, using ubiquinone as an electron acceptor. Part of the enzyme membrane arm which is embedded in the lipid bilayer and involved in proton translocation. This is NADH-ubiquinone oxidoreductase chain 4L (MT-ND4L) from Notoryctes typhlops (Southern marsupial mole).